A 476-amino-acid chain; its full sequence is Bifunctional protein HldE (476 aa).

The ribokinase stretch occupies residues 1 to 318; sequence MKVTLPDFRR…ENAIRGRAET (318 aa). An ATP-binding site is contributed by 195 to 198; sequence NLSE. Residue D264 is part of the active site. The segment at 344–476 is cytidylyltransferase; that stretch reads MTNGIFDILH…IIQSIKNGRG (133 aa).

In the N-terminal section; belongs to the carbohydrate kinase PfkB family. The protein in the C-terminal section; belongs to the cytidylyltransferase family. In terms of assembly, homodimer.

The catalysed reaction is D-glycero-beta-D-manno-heptose 7-phosphate + ATP = D-glycero-beta-D-manno-heptose 1,7-bisphosphate + ADP + H(+). The enzyme catalyses D-glycero-beta-D-manno-heptose 1-phosphate + ATP + H(+) = ADP-D-glycero-beta-D-manno-heptose + diphosphate. Its pathway is nucleotide-sugar biosynthesis; ADP-L-glycero-beta-D-manno-heptose biosynthesis; ADP-L-glycero-beta-D-manno-heptose from D-glycero-beta-D-manno-heptose 7-phosphate: step 1/4. It functions in the pathway nucleotide-sugar biosynthesis; ADP-L-glycero-beta-D-manno-heptose biosynthesis; ADP-L-glycero-beta-D-manno-heptose from D-glycero-beta-D-manno-heptose 7-phosphate: step 3/4. In terms of biological role, catalyzes the phosphorylation of D-glycero-D-manno-heptose 7-phosphate at the C-1 position to selectively form D-glycero-beta-D-manno-heptose-1,7-bisphosphate. Its function is as follows. Catalyzes the ADP transfer from ATP to D-glycero-beta-D-manno-heptose 1-phosphate, yielding ADP-D-glycero-beta-D-manno-heptose. In Yersinia pseudotuberculosis serotype O:1b (strain IP 31758), this protein is Bifunctional protein HldE.